Reading from the N-terminus, the 463-residue chain is Hydroxyacid-oxoacid transhydrogenase, mitochondrial (463 aa).

Belongs to the iron-containing alcohol dehydrogenase family. Hydroxyacid-oxoacid transhydrogenase subfamily.

It is found in the mitochondrion. The enzyme catalyses (S)-3-hydroxybutanoate + 2-oxoglutarate = (R)-2-hydroxyglutarate + acetoacetate. It carries out the reaction 4-hydroxybutanoate + 2-oxoglutarate = (R)-2-hydroxyglutarate + succinate semialdehyde. Its function is as follows. Catalyzes the cofactor-independent reversible oxidation of gamma-hydroxybutyrate (GHB) to succinic semialdehyde (SSA) coupled to reduction of 2-ketoglutarate (2-KG) to D-2-hydroxyglutarate (D-2-HG). L-3-hydroxybutyrate (L-3-OHB) is also a substrate for HOT when using 2-KG as hydrogen acceptor, resulting in the formation of D-2-HG. In Xenopus laevis (African clawed frog), this protein is Hydroxyacid-oxoacid transhydrogenase, mitochondrial (adhfe1).